The primary structure comprises 74 residues: DNA-directed RNA polymerase subunit omega (74 aa).

The protein belongs to the RNA polymerase subunit omega family. In terms of assembly, the RNAP catalytic core consists of 2 alpha, 1 beta, 1 beta' and 1 omega subunit. When a sigma factor is associated with the core the holoenzyme is formed, which can initiate transcription.

It carries out the reaction RNA(n) + a ribonucleoside 5'-triphosphate = RNA(n+1) + diphosphate. Its function is as follows. Promotes RNA polymerase assembly. Latches the N- and C-terminal regions of the beta' subunit thereby facilitating its interaction with the beta and alpha subunits. The chain is DNA-directed RNA polymerase subunit omega from Helicobacter pylori (strain P12).